The sequence spans 426 residues: L-cysteine:1D-myo-inositol 2-amino-2-deoxy-alpha-D-glucopyranoside ligase (426 aa).

Cys43 is a binding site for Zn(2+). L-cysteinyl-5'-AMP-binding positions include 43–46, Ser58, and 81–83; these read CGIT and NVT. The 'HIGH' region signature appears at 45–55; it reads ITPYDATHMGH. The short motif at 200–205 is the 'ERGGDP' region element; that stretch reads ERGGDP. Residue Trp241 coordinates L-cysteinyl-5'-AMP. Cys245 contacts Zn(2+). 263–265 contributes to the L-cysteinyl-5'-AMP binding site; the sequence is GSD. Residue His270 participates in Zn(2+) binding. Val296 is an L-cysteinyl-5'-AMP binding site. The short motif at 302 to 306 is the 'KMSKS' region element; it reads KMSKS.

The protein belongs to the class-I aminoacyl-tRNA synthetase family. MshC subfamily. In terms of assembly, monomer. Zn(2+) is required as a cofactor.

The enzyme catalyses 1D-myo-inositol 2-amino-2-deoxy-alpha-D-glucopyranoside + L-cysteine + ATP = 1D-myo-inositol 2-(L-cysteinylamino)-2-deoxy-alpha-D-glucopyranoside + AMP + diphosphate + H(+). Its function is as follows. Catalyzes the ATP-dependent condensation of GlcN-Ins and L-cysteine to form L-Cys-GlcN-Ins. The polypeptide is L-cysteine:1D-myo-inositol 2-amino-2-deoxy-alpha-D-glucopyranoside ligase (Arthrobacter sp. (strain FB24)).